A 486-amino-acid chain; its full sequence is Betaine aldehyde dehydrogenase (486 aa).

The K(+) site is built by threonine 23 and aspartate 90. An NAD(+)-binding site is contributed by 147-149; it reads GAW. Lysine 159 (charge relay system) is an active-site residue. NAD(+) contacts are provided by residues 173–176 and 226–229; these read KPSE and ESGT. Leucine 241 serves as a coordination point for K(+). Glutamate 247 acts as the Proton acceptor in catalysis. NAD(+)-binding residues include glycine 249, cysteine 281, and glutamate 382. The Nucleophile role is filled by cysteine 281. Position 281 is a cysteine sulfenic acid (-SOH) (cysteine 281). K(+)-binding residues include lysine 452 and glycine 455. Residue glutamate 459 is the Charge relay system of the active site.

It belongs to the aldehyde dehydrogenase family. In terms of assembly, dimer of dimers. It depends on K(+) as a cofactor.

It carries out the reaction betaine aldehyde + NAD(+) + H2O = glycine betaine + NADH + 2 H(+). Its pathway is amine and polyamine biosynthesis; betaine biosynthesis via choline pathway; betaine from betaine aldehyde: step 1/1. Its function is as follows. Involved in the biosynthesis of the osmoprotectant glycine betaine. Catalyzes the irreversible oxidation of betaine aldehyde to the corresponding acid. The polypeptide is Betaine aldehyde dehydrogenase (Vibrio vulnificus (strain YJ016)).